Reading from the N-terminus, the 172-residue chain is Protein YdeJ (172 aa).

This sequence belongs to the CinA family.

Functionally, does not have nicotinamide-nucleotide (NMN) amidohydrolase activity. This chain is Protein YdeJ (ydeJ), found in Escherichia coli (strain K12).